A 75-amino-acid chain; its full sequence is Small ribosomal subunit protein bS16 (75 aa).

This sequence belongs to the bacterial ribosomal protein bS16 family.

The protein is Small ribosomal subunit protein bS16 of Campylobacter lari (strain RM2100 / D67 / ATCC BAA-1060).